The chain runs to 970 residues: Polycystin-2 (970 aa).

Positions 1–11 (MVNSSRVQPQQ) are enriched in polar residues. Positions 1 to 182 (MVNSSRVQPQ…GDPLHRHLPL (182 aa)) are disordered. At 1–221 (MVNSSRVQPQ…STDREKYLKS (221 aa)) the chain is on the cytoplasmic side. The segment covering 25–45 (GPGRLMAGGAIAGAGLAAPGG) has biased composition (low complexity). A compositionally biased stretch (basic and acidic residues) spans 47–60 (REQRGLEIEMERIR). Residues 62-83 (AAARDPPAGASASPSPPLSSCS) show a composition bias toward low complexity. Phosphoserine occurs at positions 76 and 80. Positions 95–109 (EAEEEEEEEEVEGEE) are enriched in acidic residues. Over residues 125–138 (RRSASSSAVSSAGA) the composition is skewed to low complexity. Position 139 is an omega-N-methylarginine (Arg-139). Positions 139 to 148 (RGRGLGGYHG) are enriched in gly residues. The chain crosses the membrane as a helical span at residues 222 to 243 (VLRELATYLLFLIVLCILTYGM). Residues 244 to 470 (MSSSVYYYTR…PVKLIRYVTT (227 aa)) are Extracellular-facing. N-linked (GlcNAc...) asparagine glycosylation is found at Asn-301, Asn-307, and Asn-330. A disulfide bridge connects residues Cys-333 and Cys-346. 2 N-linked (GlcNAc...) asparagine glycosylation sites follow: Asn-364 and Asn-377. A helical transmembrane segment spans residues 471–491 (FDFFLAACEIIFCLFILYYVV). Over 492 to 507 (EEILEIRIHKLHYFRS) the chain is Cytoplasmic. Residues 508–528 (FWNCLDVVIIVLSVVAIGINI) form a helical membrane-spanning segment. At 529 to 554 (YRTSNVEALLQFLEDQNTFPNFENLA) the chain is on the extracellular side. The chain crosses the membrane as a helical span at residues 555 to 575 (YWQTQFNNIAAVIVFFVWIKL). Gln-559 contacts cholesterol. Over 576-599 (FKFINFNRTMSQLSTTMSRCAKDL) the chain is Cytoplasmic. The chain crosses the membrane as a helical span at residues 600–621 (FGFAIMFFIIFLAYAQLAYLVF). At 622–633 (GTQVDDFSTFQE) the chain is on the extracellular side. Residues 634–648 (CIFTQFRIILGDINF) constitute an intramembrane region (pore-forming). Residue Leu-643 coordinates Ca(2+). Residues 643-645 (LGD) carry the Selectivity filter motif. At 649–656 (AEIEEANR) the chain is on the extracellular side. Residues 657–677 (VLGPIYFTTFVFFMFFILLNM) traverse the membrane as a helical segment. Over 678 to 970 (FLAIINDTYS…GGNGSANIHV (293 aa)) the chain is Cytoplasmic. The region spanning 750-785 (KGHTDAEIEAIFTKYDQDGDQELTEHEHQQMRDDLE) is the EF-hand domain. Residues Asp-765, Asp-767, Asp-769, Glu-771, and Glu-776 each contribute to the Ca(2+) site. Residues 766-833 (QDGDQELTEH…HSSRRRGSIS (68 aa)) form a disordered region. Over residues 772-797 (LTEHEHQQMRDDLEKEREDLDLDHSS) the composition is skewed to basic and acidic residues. Over residues 798–809 (LPRPMSSRSFPR) the composition is skewed to low complexity. Phosphoserine occurs at positions 803, 810, 814, and 831. A linker region spans residues 805–824 (RSFPRSLDDSEEEDDDDSGH). The important for interaction with PACS1 and PACS2 stretch occupies residues 812–823 (DDSEEEDDDDSG). Residues 835–874 (GVSYEEFQVLVRRVDRMEHSIGSIVSKIDAVIVKLEIMER) adopt a coiled-coil conformation. The segment at 921-970 (DDAASQISHGLGTPLGLNGQPRPRSSRPSSSQSTEGMEGGGGNGSANIHV) is disordered. Low complexity predominate over residues 940–956 (QPRPRSSRPSSSQSTEG).

It belongs to the polycystin family. Homotetramer. Component of the heterotetrameric polycystin channel complex with PKD1; the tetramer contains one PKD1 chain and three PKD2 chains. Isoform 1 interacts with PKD1 while isoform 3 does not. Interacts with PKD1L1; probably forms a Ca(2+) channel. Interacts with CD2AP. Interacts with HAX1. Interacts with NEK8. Part of a complex containing AKAP5, ADCY5, ADCY6 and PDE4C. Interacts (via C-terminus) with TRPV4 (via C-terminus). Interacts (via C-terminal acidic region) with PACS1 and PACS2; these interactions retain the protein in the endoplasmic reticulum and prevent trafficking to the cell membrane. Interacts with TMEM33. Form a heterotetramer with TRPC1 with a 2:2 stoichiometry; has distinct channel properties separate from PKD2 or TRPC1 homomers alone. Interacts with TMEM120A; TMEM120A inhibits PKD2 channel activity through the physical association of PKD2 with TMEM120A. Interacts (via N-terminus) with RYR2; regulates RYR2 channel activity. Post-translationally, N-glycosylated. The four subunits in a tetramer probably differ in the extent of glycosylation; simultaneous glycosylation of all experimentally validated sites would probably create steric hindrance. Phosphorylated. Phosphorylation is important for protein function; a mutant that lacks the N-terminal phosphorylation sites cannot complement a zebrafish pkd2-deficient mutant. PKD-mediated phosphorylation at the C-terminus regulates its function in the release of Ca(2+) stores from the endoplasmic reticulum. Phosphorylation at Ser-814 regulates PKD2 trafficking. Phosphorylation at Ser-76 is required for PKD2 trafficking to or retention at the lateral plasma membrane. Phosphorylation at Ser-803, Ser-814 and Ser-831 regulates PKD2 channel activity. In terms of processing, sumoylated by SUMO1; sumoylation regulates PKD2 membrane recycling and is necessary for intravascular pressure-induced arterial contractility. In terms of tissue distribution, expressed in mesenchymally derived structures in the developing embryo at day 12.5. In adult, mostly expressed in kidney.

The protein resides in the cell projection. Its subcellular location is the cilium membrane. It is found in the endoplasmic reticulum membrane. It localises to the cell membrane. The protein localises to the basolateral cell membrane. The protein resides in the cytoplasmic vesicle membrane. Its subcellular location is the golgi apparatus. It is found in the vesicle. It localises to the secreted. The protein localises to the extracellular exosome. It catalyses the reaction K(+)(in) = K(+)(out). The enzyme catalyses Na(+)(in) = Na(+)(out). The catalysed reaction is Ca(2+)(in) = Ca(2+)(out). Its activity is regulated as follows. Channel activity is regulated by phosphorylation. Channel activity is regulated by intracellular Ca(2+). At the endoplasmic reticulum membrane (ER), TMEM33 enhances its channel activity. TMEM120A inhibits the channel activity of PKD2, and mediates mechanosensitivity of the PKD2-TMEM120A channel complex. PKD1/PKD2 complex on the plasma membrane is activated by PKD1 N-terminus. In terms of biological role, forms a nonselective cation channel. Can function as a homotetrameric ion channel or can form heteromer with PKD1. Displays distinct function depending on its subcellular localization and regulation by its binding partners. Functions as a cation channel, with a preference for monovalent cations over divalent cations that allows K(+), Na(+) and Ca(2+) influx, with low selectivity for Ca(2+). Involved in fluid-flow mechanosensation in the primary cilium in renal epithelium. In the endoplasmic reticulum, likely functions as a K(+) channel to facilitate Ca(2+) release. The heterotetrameric PKD1/PKD2 channel has higher Ca(2+) permeability than homomeric PKD2 channel and acts as a primarily Ca(2+)-permeable channel. Interacts with and acts as a regulator of a number of other channels, such as TRPV4, TRPC1, IP3R, RYR2, ultimately further affecting intracellular signaling, to modulate intracellular Ca(2+) signaling. Together with TRPV4, forms mechano- and thermosensitive channels in cilium. In cardiomyocytes, PKD2 modulates Ca(2+) release from stimulated RYR2 receptors through direct association. Also involved in left-right axis specification via its role in sensing nodal flow; forms a complex with PKD1L1 in cilia to facilitate flow detection in left-right patterning. Acts as a regulator of cilium length together with PKD1. Mediates systemic blood pressure and contributes to the myogenic response in cerebral arteries though vasoconstriction. This Bos taurus (Bovine) protein is Polycystin-2.